Reading from the N-terminus, the 303-residue chain is Probable cell division protein WhiA (303 aa).

Positions 272-303 form a DNA-binding region, H-T-H motif; that stretch reads SIQQLADSLSKPLTKSGVNHRLRKINKIADEL.

The protein belongs to the WhiA family.

Its function is as follows. Involved in cell division and chromosome segregation. The sequence is that of Probable cell division protein WhiA from Streptococcus gordonii (strain Challis / ATCC 35105 / BCRC 15272 / CH1 / DL1 / V288).